The sequence spans 429 residues: Putative F-box/kelch-repeat protein At2g21680 (429 aa).

A disordered region spans residues 1–32 (MVLISETSDDGSTGGDHQIKKPKKEEDRNKKL). Residues 17–29 (HQIKKPKKEEDRN) show a composition bias toward basic and acidic residues. In terms of domain architecture, F-box spans 37–84 (QVSLPIPEELILRCFLLVRRCHHPSLSLVCRSFHSLMSKLYDDRLRLG). Kelch repeat units lie at residues 144–175 (DIYV…RRGE), 176–221 (TSIR…VIDG), 222–267 (KIYV…LTYA), 269–313 (MKEK…VVDN), and 315–359 (LFCI…DGYK).

The sequence is that of Putative F-box/kelch-repeat protein At2g21680 from Arabidopsis thaliana (Mouse-ear cress).